A 206-amino-acid chain; its full sequence is Phosphatidyl-N-methylethanolamine N-methyltransferase (206 aa).

Over 1–20 (MKESVQEIIQQLIHSVDLQS) the chain is Lumenal. An intramembrane region (helical) is located at residues 21 to 41 (SKFQLAIVCTMFNPIFWNIVA). Topologically, residues 42–53 (RMEYHKHSLTKM) are lumenal. A helical membrane pass occupies residues 54-74 (CGGARKGCYMLAATIFSLGIV). At 75-101 (RDMVYESALREQPTCSLITGENWTKLG) the chain is on the cytoplasmic side. A helical transmembrane segment spans residues 102-122 (VALFGLGQVLVLSSMYKLGIT). 106–108 (GLG) provides a ligand contact to S-adenosyl-L-methionine. Residues 123–165 (GTYLGDYFGILMDERVTGFPFNVSNNPMYQGSTLSFLGIALYK) lie on the Lumenal side of the membrane. The helical transmembrane segment at 166–186 (GKPAGLVVSAVVYFMYKIALR) threads the bilayer. At 187 to 206 (WEEPFTAMIYANRDKAKKNM) the chain is on the cytoplasmic side. 188-189 (EE) provides a ligand contact to S-adenosyl-L-methionine.

The protein belongs to the class VI-like SAM-binding methyltransferase superfamily. PEMT/PEM2 methyltransferase family.

The protein localises to the endoplasmic reticulum membrane. Its subcellular location is the mitochondrion membrane. It carries out the reaction a 1,2-diacyl-sn-glycero-3-phosphoethanolamine + S-adenosyl-L-methionine = a 1,2-diacyl-sn-glycero-3-phospho-N-methylethanolamine + S-adenosyl-L-homocysteine + H(+). The enzyme catalyses a 1,2-diacyl-sn-glycero-3-phospho-N-methylethanolamine + S-adenosyl-L-methionine = a 1,2-diacyl-sn-glycero-3-phospho-N,N-dimethylethanolamine + S-adenosyl-L-homocysteine + H(+). It catalyses the reaction a 1,2-diacyl-sn-glycero-3-phospho-N,N-dimethylethanolamine + S-adenosyl-L-methionine = a 1,2-diacyl-sn-glycero-3-phosphocholine + S-adenosyl-L-homocysteine + H(+). Its pathway is phospholipid metabolism; phosphatidylcholine biosynthesis. Functionally, catalyzes the second two steps of the methylation pathway of phosphatidylcholine biosynthesis, the SAM-dependent methylation of phosphatidylmonomethylethanolamine (PMME) to phosphatidyldimethylethanolamine (PDME) and of PDME to phosphatidylcholine (PC). Can also catalyze the first methylation reaction of PE to PMME in the absence of PE methyltransferase CHO2. This chain is Phosphatidyl-N-methylethanolamine N-methyltransferase, found in Saccharomyces cerevisiae (strain ATCC 204508 / S288c) (Baker's yeast).